We begin with the raw amino-acid sequence, 624 residues long: Kelch-like ECH-associated protein 1 (624 aa).

Cys38 bears the S-(2-succinyl)cysteine mark. The 73-residue stretch at 77-149 (CDVTLQVKYE…AYTASISVGE (73 aa)) folds into the BTB domain. Arg135 is covalently cross-linked (N5-[4-(S-L-cysteinyl)-5-methyl-1H-imidazol-2-yl]-L-ornithine (Arg-Cys) (interchain with C-151 in KEAP1)). Residue Cys151 is modified to S-(2,3-dicarboxypropyl)cysteine; alternate. Cys151 is subject to S-(2-succinyl)cysteine; alternate. S-nitrosocysteine; alternate is present on Cys151. Cys151 participates in a covalent cross-link: N5-[4-(S-L-cysteinyl)-5-methyl-1H-imidazol-2-yl]-L-ornithine (Cys-Arg) (interchain with R-135 in KEAP1). One can recognise a BACK domain in the interval 184-286 (AIGIANFAEQ…TPRFLQTQLQ (103 aa)). The residue at position 241 (Cys241) is an S-(2-succinyl)cysteine. Residues Cys257 and Cys273 each carry the S-(2,3-dicarboxypropyl)cysteine modification. Cys288 is modified (S-(2,3-dicarboxypropyl)cysteine; alternate). Cys288 is modified (S-(2-succinyl)cysteine; alternate). Cys319 carries the S-(2-succinyl)cysteine modification. 6 Kelch repeats span residues 327-372 (LIYT…VVGG), 373-423 (LLYA…VIDG), 424-470 (HIYA…VLNR), 471-517 (LLYA…VLHN), 519-564 (IYAA…VHQG), and 565-611 (KIYV…VTME). Cys434 is subject to S-cGMP-cysteine. Cys613 bears the S-(2-succinyl)cysteine mark.

This sequence belongs to the KEAP1 family. In terms of assembly, component of the BCR(KEAP1) E3 ubiquitin ligase complex, at least composed of 2 molecules of CUL3, 2 molecules of KEAP1, and RBX1. Interacts with NFE2L2/NRF2; the interaction is direct. Forms a ternary complex with NFE2L2/NRF2 and PGAM5. Interacts with (phosphorylated) SQSTM1/p62; the interaction is direct and inactivates the BCR(KEAP1) complex by sequestering it in inclusion bodies, promoting its degradation. Interacts with NFE2L1. Interacts with BPTF and PTMA. Interacts with MAP1LC3B. Interacts indirectly with ENC1. Interacts with SESN1 and SESN2. Interacts with HSP90AA1 and HSP90AB1. Interacts with PGCKA1; this interaction prevents the ubiquitination of KEAP1 by TRIM25, thus protecting KEAP1 from degradation. In terms of processing, non-enzymatic covalent modifications of reactive cysteines by electrophile metabolites inactivate the BCR(KEAP1) complex. Accumulation of fumarate promotes the formation of cysteine S-succination (S-(2-succinyl)cysteine), leading to inactivate the BCR(KEAP1) complex and promote NFE2L2/NRF2 nuclear accumulation and activation. Nitric oxide-dependent 8-Nitro-cGMP formation promotes cysteine guanylation (S-cGMP-cysteine), leading to NFE2L2/NRF2 nuclear accumulation and activation. Itaconate, an anti-inflammatory metabolite generated in response to lipopolysaccharide, alkylates cysteines, activating NFE2L2/NRF2. Methylglyoxal, a reactive metabolite that accumulates when the glycolytic enzyme PGK1 is inhibited, promotes formation of a methylimidazole cross-link between proximal Cys-151 and Arg-135 on another KEAP1 molecule, resulting in an inactive dimer that inactivates the BCR(KEAP1) complex. Degraded via a proteasomal-independent process during selective autophagy: interaction with phosphorylated SQSTM1/p62 sequesters KEAP1 in inclusion bodies, leading to its degradation. Post-translationally, auto-ubiquitinated by the BCR(KEAP1) complex. Quinone-induced oxidative stress, but not sulforaphane, increases its ubiquitination. Ubiquitination and subsequent degradation is most pronounced following prolonged exposure of cells to oxidative stress, particularly in glutathione-deficient cells that are highly susceptible to oxidative stress. Deubiquitinated by USP25; leading to stabilization. Ubiquitinated by TRIM25; leading to degradation upon ER stress.

The protein localises to the cytoplasm. It is found in the nucleus. It participates in protein modification; protein ubiquitination. Its activity is regulated as follows. Ubiquitin ligase activity of the BCR(KEAP1) complex is inhibited by oxidative stress and electrophile metabolites such as sulforaphane. Electrophile metabolites react with reactive cysteine residues in KEAP1 and trigger non-enzymatic covalent modifications of these cysteine residues, leading to inactivate the ubiquitin ligase activity of the BCR(KEAP1) complex. Selective autophagy also inactivates the BCR(KEAP1) complex via interaction between KEAP1 and SQSTM1/p62, which sequesters the complex in inclusion bodies and promotes its degradation. Substrate-specific adapter of a BCR (BTB-CUL3-RBX1) E3 ubiquitin ligase complex that regulates the response to oxidative stress by targeting NFE2L2/NRF2 for ubiquitination. KEAP1 acts as a key sensor of oxidative and electrophilic stress: in normal conditions, the BCR(KEAP1) complex mediates ubiquitination and degradation of NFE2L2/NRF2, a transcription factor regulating expression of many cytoprotective genes. In response to oxidative stress, different electrophile metabolites trigger non-enzymatic covalent modifications of highly reactive cysteine residues in KEAP1, leading to inactivate the ubiquitin ligase activity of the BCR(KEAP1) complex, promoting NFE2L2/NRF2 nuclear accumulation and expression of phase II detoxifying enzymes. In response to selective autophagy, KEAP1 is sequestered in inclusion bodies following its interaction with SQSTM1/p62, leading to inactivation of the BCR(KEAP1) complex and activation of NFE2L2/NRF2. The BCR(KEAP1) complex also mediates ubiquitination of SQSTM1/p62, increasing SQSTM1/p62 sequestering activity and degradation. The BCR(KEAP1) complex also targets BPTF and PGAM5 for ubiquitination and degradation by the proteasome. This chain is Kelch-like ECH-associated protein 1, found in Mus musculus (Mouse).